A 403-amino-acid polypeptide reads, in one-letter code: MEFDRMLIRYGELSTKGKNRKQFVTKLAQNVKRAMTDLPEVRIHGERDRMYIILNGADYQLAEERLKPIFGIQSFSPAVRVNLDVEEVKAAALALVQDAHEENGTFKVAARRSHREFPLDSNEINQEIGAYVLQNMEDLTVNVKNPDVKLTIDVRKEGVFLSCRTILGAAGLPVGSSGRAMLMLSGGIDSPVAGYLAQKRGVEIEAVHFHSPPYTSEQAKQKAIDLAAKLAKYSGQVQMHIVPFTEIQEVIKQQIPESVIMTVTRRMMLRITDELRRKRNGLAIVNGESLGQVASQTLESMLAINAVTATPIIRPVVSMDKNEIIQIAQKIDTYNLSVQPFEDCCTIFTPPSPKTKPKLDKIEHYESFTDFDALIAKALDNIETISVNVAETAQVKDEFADLF.

One can recognise a THUMP domain in the interval 60–165 (QLAEERLKPI…KEGVFLSCRT (106 aa)). Residues 183 to 184 (ML), 208 to 209 (HF), R265, G287, and Q296 contribute to the ATP site.

It belongs to the ThiI family.

It localises to the cytoplasm. The catalysed reaction is [ThiI sulfur-carrier protein]-S-sulfanyl-L-cysteine + a uridine in tRNA + 2 reduced [2Fe-2S]-[ferredoxin] + ATP + H(+) = [ThiI sulfur-carrier protein]-L-cysteine + a 4-thiouridine in tRNA + 2 oxidized [2Fe-2S]-[ferredoxin] + AMP + diphosphate. It carries out the reaction [ThiS sulfur-carrier protein]-C-terminal Gly-Gly-AMP + S-sulfanyl-L-cysteinyl-[cysteine desulfurase] + AH2 = [ThiS sulfur-carrier protein]-C-terminal-Gly-aminoethanethioate + L-cysteinyl-[cysteine desulfurase] + A + AMP + 2 H(+). It participates in cofactor biosynthesis; thiamine diphosphate biosynthesis. Its function is as follows. Catalyzes the ATP-dependent transfer of a sulfur to tRNA to produce 4-thiouridine in position 8 of tRNAs, which functions as a near-UV photosensor. Also catalyzes the transfer of sulfur to the sulfur carrier protein ThiS, forming ThiS-thiocarboxylate. This is a step in the synthesis of thiazole, in the thiamine biosynthesis pathway. The sulfur is donated as persulfide by IscS. This is Probable tRNA sulfurtransferase from Listeria monocytogenes serovar 1/2a (strain ATCC BAA-679 / EGD-e).